The sequence spans 204 residues: HTH-type transcriptional activator BcrR (204 aa).

At 1–81 (MEFNEKLQQL…ETENRSNLKK (81 aa)) the chain is on the cytoplasmic side. Residues 7-61 (LQQLRTGKNLTQEQLAEQLYVSRTAISKWESGKGYPNMESLKCISKFFSVTIDEL) form the HTH cro/C1-type domain. Residues 18–37 (QEQLAEQLYVSRTAISKWES) constitute a DNA-binding region (H-T-H motif). Residues 82 to 102 (IYNYIYGILDMMAVAFIFLPL) traverse the membrane as a helical segment. At 103 to 126 (YGNSVGGYVYAVNLLSFTATTPFN) the chain is on the extracellular side. The helical transmembrane segment at 127-147 (LAVYWSAFAALIIIGIGKIIS) threads the bilayer. Residues 148–154 (THLDKEK) are Cytoplasmic-facing. The helical transmembrane segment at 155–175 (WGGIATKCSLTITALAVCFFA) threads the bilayer. Residues 176–181 (AAREPY) are Extracellular-facing. A helical membrane pass occupies residues 182–202 (ITVLVFLLLIGKIFVWIKQMG). Over 203 to 204 (MK) the chain is Cytoplasmic.

Its subcellular location is the cell membrane. Its activity is regulated as follows. Constitutively bound to the bcrABD promoter. Requires bacitracin for activation, probably through a conformational change, such as the oligomerization of inactive dimers to form active tetramers. In terms of biological role, functions both as a membrane-bound sensor and a transducer of bacitracin availability to activate transcription of the bcrABD operon in the presence of bacitracin. Binds specifically to two inverted repeat sequences on the bcrABD promoter, irrespective of bacitracin concentration. The protein is HTH-type transcriptional activator BcrR of Enterococcus faecalis (Streptococcus faecalis).